The primary structure comprises 502 residues: Maturase K (502 aa).

Belongs to the intron maturase 2 family. MatK subfamily.

It localises to the plastid. The protein resides in the chloroplast. Functionally, usually encoded in the trnK tRNA gene intron. Probably assists in splicing its own and other chloroplast group II introns. Binds its homologous trnK precursor transcript. This Sinapis alba (White mustard) protein is Maturase K.